The sequence spans 542 residues: Glucans biosynthesis protein D (542 aa).

Positions 1 to 31 (MHRRNLLKASMAIAAYTGLSATGLLASRAWA) form a signal peptide, tat-type signal.

This sequence belongs to the OpgD/OpgG family. Predicted to be exported by the Tat system. The position of the signal peptide cleavage has not been experimentally proven.

It is found in the periplasm. It functions in the pathway glycan metabolism; osmoregulated periplasmic glucan (OPG) biosynthesis. Functionally, probably involved in the control of the structural glucose backbone of osmoregulated periplasmic glucans (OPGs). This chain is Glucans biosynthesis protein D, found in Pseudomonas fluorescens (strain Pf0-1).